A 241-amino-acid polypeptide reads, in one-letter code: Phosphoribosylaminoimidazole-succinocarboxamide synthase (241 aa).

Belongs to the SAICAR synthetase family.

It carries out the reaction 5-amino-1-(5-phospho-D-ribosyl)imidazole-4-carboxylate + L-aspartate + ATP = (2S)-2-[5-amino-1-(5-phospho-beta-D-ribosyl)imidazole-4-carboxamido]succinate + ADP + phosphate + 2 H(+). It functions in the pathway purine metabolism; IMP biosynthesis via de novo pathway; 5-amino-1-(5-phospho-D-ribosyl)imidazole-4-carboxamide from 5-amino-1-(5-phospho-D-ribosyl)imidazole-4-carboxylate: step 1/2. The protein is Phosphoribosylaminoimidazole-succinocarboxamide synthase of Lacticaseibacillus paracasei (strain ATCC 334 / BCRC 17002 / CCUG 31169 / CIP 107868 / KCTC 3260 / NRRL B-441) (Lactobacillus paracasei).